Reading from the N-terminus, the 310-residue chain is Methionyl-tRNA formyltransferase (310 aa).

110–113 (SVLP) serves as a coordination point for (6S)-5,6,7,8-tetrahydrofolate. The interval 283–310 (TVQPPGKKSMNAADWARGARAEDIRRAR) is disordered. The segment covering 299-310 (RGARAEDIRRAR) has biased composition (basic and acidic residues).

This sequence belongs to the Fmt family.

The catalysed reaction is L-methionyl-tRNA(fMet) + (6R)-10-formyltetrahydrofolate = N-formyl-L-methionyl-tRNA(fMet) + (6S)-5,6,7,8-tetrahydrofolate + H(+). In terms of biological role, attaches a formyl group to the free amino group of methionyl-tRNA(fMet). The formyl group appears to play a dual role in the initiator identity of N-formylmethionyl-tRNA by promoting its recognition by IF2 and preventing the misappropriation of this tRNA by the elongation apparatus. This chain is Methionyl-tRNA formyltransferase, found in Mycolicibacterium gilvum (strain PYR-GCK) (Mycobacterium gilvum (strain PYR-GCK)).